The primary structure comprises 404 residues: Serine palmitoyltransferase (404 aa).

Residues 112–113 (GY), Ser-185, His-213, and Thr-241 contribute to the pyridoxal 5'-phosphate site. Lys-244 carries the N6-(pyridoxal phosphate)lysine modification.

It belongs to the class-II pyridoxal-phosphate-dependent aminotransferase family. Pyridoxal 5'-phosphate is required as a cofactor.

It localises to the cytoplasm. The catalysed reaction is L-serine + hexadecanoyl-CoA + H(+) = 3-oxosphinganine + CO2 + CoA. The protein operates within lipid metabolism; sphingolipid metabolism. Its function is as follows. Involved in de novo bacterial ceramide synthesis. Catalyzes the condensation of L-serine with palmitoyl-CoA (hexadecanoyl-CoA) to produce 3-oxosphinganine. Can also condense serine and C16:1-CoA, but shows a preference for palmitoyl-CoA. The chain is Serine palmitoyltransferase from Caulobacter vibrioides (strain NA1000 / CB15N) (Caulobacter crescentus).